Reading from the N-terminus, the 65-residue chain is Large ribosomal subunit protein bL33 (65 aa).

The tract at residues 17–40 (SRSVPSSEKRSAGVSRYTTEKNRR) is disordered.

Belongs to the bacterial ribosomal protein bL33 family.

This is Large ribosomal subunit protein bL33 from Prochlorococcus marinus (strain NATL1A).